A 24-amino-acid polypeptide reads, in one-letter code: Humanin-like 10 (24 aa).

It belongs to the humanin family. Expressed in mature brain, thyroid gland and testis.

It is found in the secreted. The protein localises to the cytoplasm. Functionally, plays a role as a neuroprotective and antiapoptotic factor. In Homo sapiens (Human), this protein is Humanin-like 10.